The following is a 630-amino-acid chain: A disintegrin and metalloproteinase with thrombospondin motifs 4 (630 aa).

Positions 1–5 (RRTKR) are excised as a propeptide. Residues 11–221 (RFVETLVVAD…GYGHCLLDKP (211 aa)) enclose the Peptidase M12B domain. Intrachain disulfides connect Cys-86–Cys-138, Cys-115–Cys-120, Cys-132–Cys-216, Cys-170–Cys-200, Cys-242–Cys-265, Cys-253–Cys-275, Cys-260–Cys-294, Cys-288–Cys-299, Cys-325–Cys-362, Cys-329–Cys-367, and Cys-340–Cys-352. N-linked (GlcNAc...) asparagine glycosylation occurs at Asn-96. His-154 lines the Zn(2+) pocket. Glu-155 is a catalytic residue. Zn(2+) contacts are provided by His-158 and His-164. Positions 233–303 (GKDYDADRQC…CMGGRCLHVD (71 aa)) constitute a Disintegrin domain. One can recognise a TSP type-1 domain in the interval 313 to 368 (AGGWGPWGPWGDCSRTCGGGVQFSSRDCTKPVPRNGGKYCEGRRTPFRSCNTKNCP). Asn-474 is a glycosylation site (N-linked (GlcNAc...) asparagine). The segment at 479 to 630 (SKQSGSFKKF…LRKRTWAGRK (152 aa)) is spacer.

Interacts with SRPX2. Zn(2+) is required as a cofactor. The precursor is cleaved by a furin endopeptidase. Post-translationally, glycosylated. Can be O-fucosylated by POFUT2 on a serine or a threonine residue found within the consensus sequence C1-X(2)-(S/T)-C2-G of the TSP type-1 repeat domains where C1 and C2 are the first and second cysteine residue of the repeat, respectively. Fucosylated repeats can then be further glycosylated by the addition of a beta-1,3-glucose residue by the glucosyltransferase, B3GALTL. Fucosylation mediates the efficient secretion of ADAMTS family members. Can also be C-glycosylated with one or two mannose molecules on tryptophan residues within the consensus sequence W-X-X-W of the TPRs, and N-glycosylated. These other glycosylations can also facilitate secretion. As to expression, brain specific.

The protein resides in the secreted. The protein localises to the extracellular space. It localises to the extracellular matrix. The catalysed reaction is Glutamyl endopeptidase. Bonds cleaved include 370-Thr-Glu-Gly-Glu-|-Ala-Arg-Gly-Ser-377 in the interglobular domain of mammalian aggrecan.. In terms of biological role, cleaves aggrecan, a cartilage proteoglycan, at the '392-Glu-|-Ala-393' site and may be involved in its turnover. Also cleaves COMP. May play an important role in the destruction of aggrecan in arthritic diseases. The polypeptide is A disintegrin and metalloproteinase with thrombospondin motifs 4 (Adamts4) (Rattus norvegicus (Rat)).